Reading from the N-terminus, the 215-residue chain is Nascent polypeptide-associated complex subunit alpha (215 aa).

Residues 1–81 (MPGEATDTVP…SEKKARKAMS (81 aa)) are disordered. Residues 9–28 (VPATEQELPQPQAETGSGTE) show a composition bias toward polar residues. Residues 29 to 42 (SDSDESVPELEEQD) show a composition bias toward acidic residues. Residue serine 43 is modified to Phosphoserine; by ILK1. A compositionally biased stretch (low complexity) spans 44-57 (TQATTQQAQLAAAA). Residues 69 to 80 (QSRSEKKARKAM) form a required for DNA-binding region. The region spanning 70–135 (SRSEKKARKA…AKIEDLSQQA (66 aa)) is the NAC-A/B domain. Positions 93–108 (RVTIRKSKNILFVITK) are RNA/DNA-binding. Phosphoserine is present on serine 132. Lysine 142 is subject to N6-acetyllysine; alternate. Lysine 142 is covalently cross-linked (Glycyl lysine isopeptide (Lys-Gly) (interchain with G-Cter in SUMO2); alternate). Threonine 159 is subject to Phosphothreonine; by GSK3-beta. Position 161 is a phosphothreonine (threonine 161). 4 positions are modified to phosphoserine: serine 166, serine 186, serine 191, and serine 203. The 38-residue stretch at 176–213 (VEVKDIELVMSQANVSRAKAVRALKNNSNDIVNAIMEL) folds into the UBA domain.

This sequence belongs to the NAC-alpha family. As to quaternary structure, part of the nascent polypeptide-associated complex (NAC), which is a heterodimer of NACA and BTF3 (via NAC-A/B domains). NAC associates with ribosomes through the BTF3/NACB subunit and contacts the ribosomal protein L23, which is positioned near the exiting site. Both subunits can contact nascent polypeptide chains. NACA may also form homodimers, and only this form binds DNA. Interacts with TBP and JUN. In terms of processing, phosphorylation of Ser-43 by ILK during cell adhesion may promote nuclear localization. Phosphorylation of Thr-159 by GSK3B may promote proteasome mediated degradation.

The protein resides in the cytoplasm. The protein localises to the nucleus. Functionally, prevents inappropriate targeting of non-secretory polypeptides to the endoplasmic reticulum (ER). Binds to nascent polypeptide chains as they emerge from the ribosome and blocks their interaction with the signal recognition particle (SRP), which normally targets nascent secretory peptides to the ER. Also reduces the inherent affinity of ribosomes for protein translocation sites in the ER membrane (M sites). May act as a specific coactivator for JUN, binding to DNA and stabilizing the interaction of JUN homodimers with target gene promoters. In Bos taurus (Bovine), this protein is Nascent polypeptide-associated complex subunit alpha (NACA).